A 135-amino-acid polypeptide reads, in one-letter code: Ribosomal RNA large subunit methyltransferase H (135 aa).

Residues Leu-52, Gly-83, and Leu-102–Leu-107 each bind S-adenosyl-L-methionine.

It belongs to the RNA methyltransferase RlmH family. As to quaternary structure, homodimer.

The protein localises to the cytoplasm. It catalyses the reaction pseudouridine(1915) in 23S rRNA + S-adenosyl-L-methionine = N(3)-methylpseudouridine(1915) in 23S rRNA + S-adenosyl-L-homocysteine + H(+). Its function is as follows. Specifically methylates the pseudouridine at position 1915 (m3Psi1915) in 23S rRNA. The sequence is that of Ribosomal RNA large subunit methyltransferase H from Polynucleobacter necessarius subsp. necessarius (strain STIR1).